Consider the following 566-residue polypeptide: Solute carrier family 22 member 16 (566 aa).

Residues 20 to 40 (FASAFQTISCGIHYLASVFIA) traverse the membrane as a helical segment. N-linked (GlcNAc...) asparagine glycans are attached at residues asparagine 52, asparagine 60, and asparagine 112. A run of 5 helical transmembrane segments spans residues 149–169 (LIQP…GDIA), 176–196 (PIIW…AFTF), 201–221 (FVIV…VVFV), 237–257 (MHVH…GFLV), and 261–281 (WIYQ…CWML). N-linked (GlcNAc...) asparagine glycosylation occurs at asparagine 344. A run of 6 helical transmembrane segments spans residues 351–371 (TITV…FALN), 381–401 (LNLF…CLGM), 408–428 (NTLA…MLIP), 436–456 (IAMS…IYLY), 468–488 (LAVG…PFCV), and 493–513 (VWIF…GILT).

Belongs to the major facilitator (TC 2.A.1) superfamily. Organic cation transporter (TC 2.A.1.19) family.

It is found in the membrane. In terms of biological role, high affinity carnitine transporter. This chain is Solute carrier family 22 member 16 (slc22a16), found in Xenopus laevis (African clawed frog).